A 91-amino-acid polypeptide reads, in one-letter code: Small ribosomal subunit protein uS19 (91 aa).

The protein belongs to the universal ribosomal protein uS19 family.

In terms of biological role, protein S19 forms a complex with S13 that binds strongly to the 16S ribosomal RNA. In Hahella chejuensis (strain KCTC 2396), this protein is Small ribosomal subunit protein uS19.